The primary structure comprises 434 residues: Glutamine synthetase leaf isozyme, chloroplastic (434 aa).

Disordered regions lie at residues 1–33 (MQVRRDDDGAGGCAGDAVPGGGEGQDGVPARQP) and 101–126 (TISKPVEDPSELPKWNYDGSSTGQAP). The transit peptide at 1-54 (MQVRRDDDGAGGCAGDAVPGGGEGQDGVPARQPAGRVWGVSRAARATSGFKVLA) directs the protein to the chloroplast. Positions 10–25 (AGGCAGDAVPGGGEGQ) are enriched in gly residues. Residues 81–161 (IIAEYIWVGG…VICDTYTPQG (81 aa)) form the GS beta-grasp domain. The 267-residue stretch at 168-434 (KRHMAAQIFS…LAAKKLALKV (267 aa)) folds into the GS catalytic domain.

The protein belongs to the glutamine synthetase family. Homooctamer.

It is found in the plastid. It localises to the chloroplast. It catalyses the reaction L-glutamate + NH4(+) + ATP = L-glutamine + ADP + phosphate + H(+). Functionally, the light-modulated chloroplast enzyme, encoded by a nuclear gene and expressed primarily in leaves, is responsible for the reassimilation of the ammonia generated by photorespiration. This chain is Glutamine synthetase leaf isozyme, chloroplastic, found in Hordeum vulgare (Barley).